We begin with the raw amino-acid sequence, 304 residues long: MGLDSPDMRPELSQYKHLSAGKVREIYEIDEHHILMVASDRISAYDFILDTEIPDKGRVLTAMSQFFFDAIDFPNHLAGPIDDPRIPEEVLGRAMVCKKLAMMPFECVVRGYLTGSGLEEYRQTGTVCGITLPEGLVESSRLPEPIFTPATKADVGDHDINVSFDVVEERLGEARANQLRDASIAIYSRAAEIALERGVILADTKFEFGLDENGELVLGDEVLTPDSSRYWPAEGYEAGHVQPSFDKQYVRNWLTGPKSGWDKNSGVQPPALPGSVVEATRERYIEAYELISGNKFSTWIGCCV.

This sequence belongs to the SAICAR synthetase family.

The catalysed reaction is 5-amino-1-(5-phospho-D-ribosyl)imidazole-4-carboxylate + L-aspartate + ATP = (2S)-2-[5-amino-1-(5-phospho-beta-D-ribosyl)imidazole-4-carboxamido]succinate + ADP + phosphate + 2 H(+). It participates in purine metabolism; IMP biosynthesis via de novo pathway; 5-amino-1-(5-phospho-D-ribosyl)imidazole-4-carboxamide from 5-amino-1-(5-phospho-D-ribosyl)imidazole-4-carboxylate: step 1/2. The protein is Phosphoribosylaminoimidazole-succinocarboxamide synthase of Corynebacterium efficiens (strain DSM 44549 / YS-314 / AJ 12310 / JCM 11189 / NBRC 100395).